We begin with the raw amino-acid sequence, 821 residues long: Maternal DNA replication licensing factor mcm6 (821 aa).

The C4-type zinc finger occupies 159–186 (CMDCQSVVKDVEQQFRYTQPTICKNPVC). Residues 347-554 (LYHNLCTSLF…TDYAIARRIV (208 aa)) form the MCM domain. 397-404 (GDPSTSKS) provides a ligand contact to ATP. The short motif at 529–532 (SRFD) is the Arginine finger element.

It belongs to the MCM family. In terms of assembly, component of the mcm2-7 complex (RLF-M). The complex forms a toroidal hexameric ring with the proposed subunit order mcm2-mcm6-mcm4-mcm7-mcm3-mcm5. The heterodimer of mmcm3/mcm5 interacts with mcm4, mmcm6, mcm7 and weakly with mcm2. Component of the CMG helicase complex, composed of the mcm2-7 complex, the GINS complex and cdc45.

It is found in the nucleus. It localises to the chromosome. It catalyses the reaction ATP + H2O = ADP + phosphate + H(+). Its function is as follows. Acts as a component of the mcm2-7 complex (mcm complex) which is the putative replicative helicase essential for 'once per cell cycle' DNA replication initiation and elongation in eukaryotic cells. The active ATPase sites in the mcm2-7 ring are formed through the interaction surfaces of two neighboring subunits such that a critical structure of a conserved arginine finger motif is provided in trans relative to the ATP-binding site of the Walker A box of the adjacent subunit. The six ATPase active sites, however, are likely to contribute differentially to the complex helicase activity. The existence of maternal and zygotic forms of mcm3 and mcm6 suggests that specific forms of mcm2-7 complexes may be used during different stages of development. The chain is Maternal DNA replication licensing factor mcm6 from Xenopus tropicalis (Western clawed frog).